The primary structure comprises 532 residues: Apolipoprotein N-acyltransferase (532 aa).

Transmembrane regions (helical) follow at residues 37–57 (IFVAGFVSFPVLVWLIDGAIA), 75–95 (WWFGFGYFVSGLWWIGTALLV), 106–126 (LAVLGLPAFLALFYAFAAMIA), 128–148 (LLWSDGLGRILAFAFGFALAE), 179–199 (VIGLVGMSALAVFVFAAPALL), and 207–227 (TGIGLAIFLALAHVGFGAWTL). Residues 245-494 (VQPSIAQAMK…VGVVDSYLPS (250 aa)) enclose the CN hydrolase domain. The Proton acceptor role is filled by Glu289. Residue Lys353 is part of the active site. Cys406 (nucleophile) is an active-site residue. The chain crosses the membrane as a helical span at residues 505–525 (GWIQTVLILLTLLAASVGLIL).

The protein belongs to the CN hydrolase family. Apolipoprotein N-acyltransferase subfamily.

The protein resides in the cell inner membrane. It catalyses the reaction N-terminal S-1,2-diacyl-sn-glyceryl-L-cysteinyl-[lipoprotein] + a glycerophospholipid = N-acyl-S-1,2-diacyl-sn-glyceryl-L-cysteinyl-[lipoprotein] + a 2-acyl-sn-glycero-3-phospholipid + H(+). Its pathway is protein modification; lipoprotein biosynthesis (N-acyl transfer). Functionally, catalyzes the phospholipid dependent N-acylation of the N-terminal cysteine of apolipoprotein, the last step in lipoprotein maturation. This is Apolipoprotein N-acyltransferase from Brucella melitensis biotype 1 (strain ATCC 23456 / CCUG 17765 / NCTC 10094 / 16M).